A 635-amino-acid chain; its full sequence is Probable extracellular metalloproteinase 1 (635 aa).

Positions 1–19 are cleaved as a signal peptide; the sequence is MHGLLLAAGLLSLPLHVLA. The propeptide occupies 20 to 246; sequence HPQPSTSTSL…VHNVVDYVAH (227 aa). N-linked (GlcNAc...) asparagine glycosylation occurs at Asn-287. His-430 provides a ligand contact to Zn(2+). Glu-431 is an active-site residue. His-434 is a Zn(2+) binding site. Asn-475, Asn-594, and Asn-623 each carry an N-linked (GlcNAc...) asparagine glycan.

The protein belongs to the peptidase M36 family. Zn(2+) is required as a cofactor.

It localises to the secreted. In terms of biological role, secreted metalloproteinase probably acting as a virulence factor. This chain is Probable extracellular metalloproteinase 1 (MEP1), found in Trichophyton verrucosum (strain HKI 0517).